A 217-amino-acid chain; its full sequence is ATP-dependent Clp protease proteolytic subunit (217 aa).

Residue serine 121 is the Nucleophile of the active site. Residue histidine 146 is part of the active site.

The protein belongs to the peptidase S14 family. Fourteen ClpP subunits assemble into 2 heptameric rings which stack back to back to give a disk-like structure with a central cavity, resembling the structure of eukaryotic proteasomes.

It is found in the cytoplasm. The catalysed reaction is Hydrolysis of proteins to small peptides in the presence of ATP and magnesium. alpha-casein is the usual test substrate. In the absence of ATP, only oligopeptides shorter than five residues are hydrolyzed (such as succinyl-Leu-Tyr-|-NHMec, and Leu-Tyr-Leu-|-Tyr-Trp, in which cleavage of the -Tyr-|-Leu- and -Tyr-|-Trp bonds also occurs).. Functionally, cleaves peptides in various proteins in a process that requires ATP hydrolysis. Has a chymotrypsin-like activity. Plays a major role in the degradation of misfolded proteins. The chain is ATP-dependent Clp protease proteolytic subunit from Burkholderia lata (strain ATCC 17760 / DSM 23089 / LMG 22485 / NCIMB 9086 / R18194 / 383).